Consider the following 67-residue polypeptide: Putative sodium channel alpha-toxin Acra7 (67 aa).

Residues 2-66 (RDGYIVKPTN…PIKDPNQDCT (65 aa)) form the LCN-type CS-alpha/beta domain. 4 disulfides stabilise this stretch: Cys-12-Cys-65, Cys-16-Cys-37, Cys-23-Cys-47, and Cys-27-Cys-49. Arg-67 is a propeptide (removed by a carboxypeptidase).

The protein belongs to the long (4 C-C) scorpion toxin superfamily. Sodium channel inhibitor family. Alpha subfamily. As to expression, expressed by the venom gland.

It is found in the secreted. Functionally, alpha toxins bind voltage-independently at site-3 of sodium channels (Nav) and inhibit the inactivation of the activated channels, thereby blocking neuronal transmission. The protein is Putative sodium channel alpha-toxin Acra7 of Androctonus crassicauda (Arabian fat-tailed scorpion).